Here is a 360-residue protein sequence, read N- to C-terminus: Probable CCR4-associated factor 1 homolog 1 (360 aa).

A divalent metal cation contacts are provided by Asp37, Glu39, Asp155, and Asp226.

This sequence belongs to the CAF1 family. In terms of assembly, component of the CCR4-NOT complex, at least composed of CRR4 and CAF1 proteins. Requires a divalent metal cation as cofactor.

Its subcellular location is the nucleus. It localises to the cytoplasm. It carries out the reaction Exonucleolytic cleavage of poly(A) to 5'-AMP.. Ubiquitous transcription factor required for a diverse set of processes. It is a component of the CCR4 complex involved in the control of gene expression. This Arabidopsis thaliana (Mouse-ear cress) protein is Probable CCR4-associated factor 1 homolog 1 (CAF1-1).